The primary structure comprises 232 residues: Ribose-5-phosphate isomerase A (232 aa).

Residues 28–31 (TGST), 83–86 (DGAD), and 96–99 (KGGG) each bind substrate. The Proton acceptor role is filled by Glu105. Substrate is bound at residue Lys123.

Belongs to the ribose 5-phosphate isomerase family. Homodimer.

The catalysed reaction is aldehydo-D-ribose 5-phosphate = D-ribulose 5-phosphate. It functions in the pathway carbohydrate degradation; pentose phosphate pathway; D-ribose 5-phosphate from D-ribulose 5-phosphate (non-oxidative stage): step 1/1. Catalyzes the reversible conversion of ribose-5-phosphate to ribulose 5-phosphate. This Rhizobium etli (strain ATCC 51251 / DSM 11541 / JCM 21823 / NBRC 15573 / CFN 42) protein is Ribose-5-phosphate isomerase A.